The sequence spans 165 residues: Regulatory protein RecX (165 aa).

The protein belongs to the RecX family.

It localises to the cytoplasm. Functionally, modulates RecA activity. This chain is Regulatory protein RecX, found in Cronobacter sakazakii (strain ATCC BAA-894) (Enterobacter sakazakii).